The sequence spans 291 residues: uncharacterized protein (291 aa).

Solcar repeat units follow at residues 15 to 93 (PGPV…IKKS), 104 to 190 (PRTV…IKQS), and 201 to 287 (LSTV…VMEI). Transmembrane regions (helical) follow at residues 21 to 41 (IIAG…AEFA), 70 to 90 (STVI…FDSI), 108 to 128 (LAGL…FESI), 169 to 189 (TVAR…SIKQ), 201 to 221 (LSTV…VYCT), and 259 to 280 (FWSG…VFTV).

Belongs to the mitochondrial carrier (TC 2.A.29) family.

It is found in the mitochondrion inner membrane. This is an uncharacterized protein from Schizosaccharomyces pombe (strain 972 / ATCC 24843) (Fission yeast).